A 75-amino-acid chain; its full sequence is Small ribosomal subunit protein bS18 (75 aa).

It belongs to the bacterial ribosomal protein bS18 family. Part of the 30S ribosomal subunit. Forms a tight heterodimer with protein bS6.

In terms of biological role, binds as a heterodimer with protein bS6 to the central domain of the 16S rRNA, where it helps stabilize the platform of the 30S subunit. The chain is Small ribosomal subunit protein bS18 from Thermotoga sp. (strain RQ2).